The primary structure comprises 228 residues: 7-cyano-7-deazaguanine synthase (228 aa).

Position 16 to 26 (16 to 26 (FSGGQDSTTCL)) interacts with ATP. Zn(2+) contacts are provided by cysteine 193, cysteine 201, cysteine 204, and cysteine 207.

Belongs to the QueC family. Zn(2+) is required as a cofactor.

The catalysed reaction is 7-carboxy-7-deazaguanine + NH4(+) + ATP = 7-cyano-7-deazaguanine + ADP + phosphate + H2O + H(+). It functions in the pathway purine metabolism; 7-cyano-7-deazaguanine biosynthesis. Its function is as follows. Catalyzes the ATP-dependent conversion of 7-carboxy-7-deazaguanine (CDG) to 7-cyano-7-deazaguanine (preQ(0)). The sequence is that of 7-cyano-7-deazaguanine synthase from Pasteurella multocida (strain Pm70).